The chain runs to 287 residues: Ribosomal RNA small subunit methyltransferase A (287 aa).

Asn28, Leu30, Gly55, Glu77, Asp103, and Asn123 together coordinate S-adenosyl-L-methionine.

It belongs to the class I-like SAM-binding methyltransferase superfamily. rRNA adenine N(6)-methyltransferase family. RsmA subfamily.

It is found in the cytoplasm. The enzyme catalyses adenosine(1518)/adenosine(1519) in 16S rRNA + 4 S-adenosyl-L-methionine = N(6)-dimethyladenosine(1518)/N(6)-dimethyladenosine(1519) in 16S rRNA + 4 S-adenosyl-L-homocysteine + 4 H(+). Functionally, specifically dimethylates two adjacent adenosines (A1518 and A1519) in the loop of a conserved hairpin near the 3'-end of 16S rRNA in the 30S particle. May play a critical role in biogenesis of 30S subunits. The sequence is that of Ribosomal RNA small subunit methyltransferase A from Rhodopseudomonas palustris (strain BisA53).